Reading from the N-terminus, the 281-residue chain is MLYLIGLGLGDAKDITVKGLEVVRRCSRVYLEAYTSVLTVGKEALEEFYGRKLILADREEVEQEADNIFKDADVSDVAFLVVGDPFGATTHSDLILRATKLGIPYQVIHNASIMNAVGCCGLQLYRFGETVSIVFWTDTWRPESFFDKVKRNRANGMHTLCLLDIKVKEQSLENLIRGRKIYEPPRYMSVNQAAQQLLEIVQNHRARGEEPAITEETLCVGLARVGAEDQKIAAGTLQQMCTVSLGEPLHSLVITGGNLHPLEMEMLSLFSIPESQSTDGL.

Residues leucine 9, aspartate 84, glycine 87, 112–113, and leucine 163 contribute to the S-adenosyl-L-methionine site; that span reads SI. Serine 171 is subject to Phosphoserine. 2 residues coordinate S-adenosyl-L-methionine: valine 225 and histidine 250.

Belongs to the diphthine synthase family.

It catalyses the reaction 2-[(3S)-amino-3-carboxypropyl]-L-histidyl-[translation elongation factor 2] + 4 S-adenosyl-L-methionine = diphthine methyl ester-[translation elongation factor 2] + 4 S-adenosyl-L-homocysteine + 3 H(+). Its pathway is protein modification; peptidyl-diphthamide biosynthesis. Its function is as follows. S-adenosyl-L-methionine-dependent methyltransferase that catalyzes four methylations of the modified target histidine residue in translation elongation factor 2 (EF-2), to form an intermediate called diphthine methyl ester. The four successive methylation reactions represent the second step of diphthamide biosynthesis. The protein is Diphthine methyl ester synthase (Dph5) of Mus musculus (Mouse).